We begin with the raw amino-acid sequence, 3131 residues long: Enniatin synthase (3131 aa).

Positions 53-466 (ADDKQRAVGH…VEKVDMMTQE (414 aa)) are condensation 1. Positions 186 to 212 (NDEHPRQFETPDSSQATPEEDLQPNPS) are disordered. The interval 495 to 887 (SQSPNKAAVA…GRMDSQVKIR (393 aa)) is adenylation 1. The region spanning 1010-1086 (SSGTDTYTKL…GLKAIVIGTS (77 aa)) is the Carrier 1 domain. At serine 1047 the chain carries O-(pantetheine 4'-phosphoryl)serine. A condensation 2 region spans residues 1105-1534 (SYAQNRMWFL…ETCISVLPLT (430 aa)). Residues 1563-1960 (FREQAAANPE…GRMDNQFKIR (398 aa)) are adenylation 2. The interval 2021-2177 (EGWQDHFESG…YLAEVIDGLI (157 aa)) is S-adenosyl-L-methionine-dependent N-methyltransferase. 2 Carrier domains span residues 2504-2578 (FPIS…RQGL) and 2598-2671 (APRT…ESSH). Residues serine 2538 and serine 2632 each carry the O-(pantetheine 4'-phosphoryl)serine modification. The interval 2718-3123 (QDVYPSTQMQ…RHVLEEVCKT (406 aa)) is condensation 3.

The protein belongs to the ATP-dependent AMP-binding enzyme family. It depends on pantetheine 4'-phosphate as a cofactor. The N-terminus is blocked.

The protein operates within antibiotic biosynthesis; enniatin biosynthesis. With respect to regulation, the N-methylation activity is inhibited by S-adenosyl-L-homocysteine and sinefugin. Nonribosomal peptide synthetase that synthesizes enniatin by coupling three D-hydroxycarboxylic acids and three L-amino acids via amide and ester bonds in an alternating fashion. Whereas ESYN1 can accept different amino acids as precursors (L -valine, L-isoleucine or L-leucine), only one species of D-hydroxycarboxylic acid can be found in natural enniatin isolates (D-hydroxyisovaleric acid, D-Hiv). D-Hiv stems from L-valine deanimation by a valine aminotransferase to 2-keto-isovaleric acid (2-Kiv), which becomes subsequently reduced by a keto-isovaleric acid reductase (KivR) to D-Hiv. Peptide bond formation and N-methylation of the amino acid occur before three enzyme-bound dipeptidols are condensed to a hexapeptidol. The sequence is that of Enniatin synthase from Fusarium equiseti (Fusarium scirpi).